Reading from the N-terminus, the 371-residue chain is Leu/Ile/Val-binding protein homolog 2 (371 aa).

The N-terminal stretch at 1–23 (MKKSLFCGVCLCALVAMGGTSFA) is a signal peptide.

This sequence belongs to the leucine-binding protein family.

Functionally, component of an amino-acid transport system. The polypeptide is Leu/Ile/Val-binding protein homolog 2 (Brucella abortus (strain 2308)).